Consider the following 475-residue polypeptide: Vitronectin (475 aa).

Positions 1–19 (MAPLRPIFTLALLLWVVLA) are cleaved as a signal peptide. One can recognise an SMB domain in the interval 20 to 63 (DQESCKDRCTEGFNANRKCQCDELCSYYQSCCADYAAECKPQVT). 7 cysteine pairs are disulfide-bonded: Cys-24-Cys-28, Cys-24-Cys-40, Cys-28-Cys-58, Cys-38-Cys-40, Cys-38-Cys-51, Cys-44-Cys-50, and Cys-51-Cys-58. The Cell attachment site motif lies at 64–66 (RGD). The residue at position 69 (Thr-69) is a Phosphothreonine. Residues Tyr-75, Tyr-78, and Tyr-80 each carry the sulfotyrosine modification. Residue Asn-87 is glycosylated (N-linked (GlcNAc...) asparagine). Residues 87–123 (NASVHAQPESPTVGQEPTLSPDLQTEGGAEPTHEVPL) form a disordered region. A compositionally biased stretch (polar residues) spans 95–109 (ESPTVGQEPTLSPDL). Hemopexin repeat units follow at residues 158–202 (GKPF…VWGI), 203–250 (EGPI…FSGI), and 251–305 (PDNV…FEHF). Residues Asn-169 and Asn-242 are each glycosylated (N-linked (GlcNAc...) asparagine). Sulfotyrosine is present on residues Tyr-279 and Tyr-282. Ser-312 is modified (phosphoserine). The tract at residues 359-391 (LTPSPSAKKQKSRRRSRKRYRSRYGRGRSQNSR) is disordered. The span at 366–384 (KKQKSRRRSRKRYRSRYGR) shows a compositional bias: basic residues. The tract at residues 366-392 (KKQKSRRRSRKRYRSRYGRGRSQNSRR) is glycosaminoglycan binding region. Phosphoserine is present on Ser-394. Residues 419-469 (TSWLKPATSEPIQSVYFFSGDKYYRVNLRTQRVDTVNPPYPRSIAQYWLGC) form a Hemopexin 4 repeat.

In terms of assembly, interacts with SERPINE1/PAI1 and C1QBP. Monomer. Sulfated on tyrosine residues. Post-translationally, N- and O-glycosylated. In terms of processing, it has been suggested that the active SMB domain may be permitted considerable disulfide bond heterogeneity or variability, thus two alternate disulfide patterns based on 3D structures are described with 1 disulfide bond conserved in both. Plasma.

The protein resides in the secreted. It localises to the extracellular space. Its function is as follows. Vitronectin is a cell adhesion and spreading factor found in serum and tissues. Vitronectin interact with glycosaminoglycans and proteoglycans. Is recognized by certain members of the integrin family and serves as a cell-to-substrate adhesion molecule. Inhibitor of the membrane-damaging effect of the terminal cytolytic complement pathway. This chain is Vitronectin (VTN), found in Oryctolagus cuniculus (Rabbit).